The following is a 617-amino-acid chain: MGIISDNAQSHSSSSAPAPSIFSSSFATRIFSDVAGDITIVVDGESFLLHKFPLVARCGKIRKMVAEMKESSSNLSHTELRDFPGGSKTFELAMKFCYGINFEITISNVVAIRCAAGYLEMTEDFKEENLIARTETYLEQVAFRSLEKSVEVLCSCETLYPQDIAETAHIPDRCVEAIAVNACREQLVLGLSRLNRGTESGELKRGDSPEWWIEDLSALRIDYYARVVSAMARTGLRSESIITSLMHYAQESLKGIRNCKERTKLDSGTFENEQRNVLEAIVSLFPNDNVPLSFLFGMLRVGITINVAISCRLELERRIAQQLETVSLDDLLIPVVRDGDSMYDVDTVHRILVCFLKKIEEEEEYDEDCCYENETENLTGSMCHSSLLKVGRIMDAYLAEIAPDPCLSLHKFMALIEILPDYARVMDDGLYRAIDMFLKGHPSLNEQECKSLCKFIDTQKLSQEACNHVAQNDRLPMQMVVRVLYSEQLRMKNVMSGESGEGLLLSSQKHSSENPSRAVSPRDTYASLRRENRELKLEISRVRVRLTELEKEQILMKQGMMEKSGHGGTLLTSLSKGIGRISIFGGGPTEGKLRNANRKSKSRLERKTVRSRPESMF.

The BTB domain occupies 36 to 106 (GDITIVVDGE…CYGINFEITI (71 aa)). One can recognise an NPH3 domain in the interval 210–490 (EWWIEDLSAL…VRVLYSEQLR (281 aa)). A Phosphotyrosine modification is found at tyrosine 431. 2 disordered regions span residues 505–525 (LSSQ…RDTY) and 585–617 (GGGP…ESMF). Residues 602-617 (SRLERKTVRSRPESMF) are compositionally biased toward basic and acidic residues.

The protein belongs to the NPH3 family.

It functions in the pathway protein modification; protein ubiquitination. In terms of biological role, may act as a substrate-specific adapter of an E3 ubiquitin-protein ligase complex (CUL3-RBX1-BTB) which mediates the ubiquitination and subsequent proteasomal degradation of target proteins. In Arabidopsis thaliana (Mouse-ear cress), this protein is BTB/POZ domain-containing protein At3g08570.